Reading from the N-terminus, the 160-residue chain is Probable transcriptional regulator YgiV (160 aa).

In terms of biological role, represses expression of mcbR. This is Probable transcriptional regulator YgiV (ygiV) from Escherichia coli (strain K12).